The sequence spans 573 residues: Sulfate adenylyltransferase (573 aa).

The interval 1-169 is N-terminal; the sequence is MANPPHGGIL…VEAVNKLNHY (169 aa). The catalytic stretch occupies residues 170–394; it reads DYVGLRFTPA…LRESNPPRSK (225 aa). Residue Q197 coordinates sulfate. ATP is bound by residues 197–200 and 291–294; these read QTRN and GRDH. Catalysis depends on residues T198, R199, and N200. Sulfate is bound at residue R199. A295 is a sulfate binding site. L333 is a binding site for ATP. Residues 395 to 573 are allosteric regulation domain; adenylyl-sulfate kinase-like; sequence QGFTVFLTGY…LESQGFLEKA (179 aa). Residues 434-437, R451, 477-478, and R515 each bind 3'-phosphoadenylyl sulfate; these read DTVR and IA.

It in the N-terminal section; belongs to the sulfate adenylyltransferase family. The protein in the C-terminal section; belongs to the APS kinase family. Homohexamer. Dimer of trimers.

The protein localises to the cytoplasm. It catalyses the reaction sulfate + ATP + H(+) = adenosine 5'-phosphosulfate + diphosphate. The protein operates within sulfur metabolism; hydrogen sulfide biosynthesis; sulfite from sulfate: step 1/3. With respect to regulation, allosterically inhibited by 3'-phosphoadenosine 5'-phosphosulfate (PAPS). In terms of biological role, catalyzes the first intracellular reaction of sulfate assimilation, forming adenosine-5'-phosphosulfate (APS) from inorganic sulfate and ATP. Plays an important role in sulfate activation as a component of the biosynthesis pathway of sulfur-containing amino acids. This chain is Sulfate adenylyltransferase, found in Coccidioides immitis (strain RS) (Valley fever fungus).